The sequence spans 892 residues: Alpha-actinin-1 (892 aa).

N-acetylmethionine is present on Met1. The tract at residues 1 to 247 (MDHYDSQQTN…IMTYVSSFYH (247 aa)) is actin-binding. Ser6 is subject to Phosphoserine. Tyr12 is modified (phosphotyrosine; by FAK1). 2 Calponin-homology (CH) domains span residues 31-135 (KQQR…LRFA) and 144-250 (TSAK…HAFS). N6-acetyllysine is present on residues Lys95 and Lys195. 4 Spectrin repeats span residues 274–384 (QLME…WLLN), 394–499 (HLAE…ALER), 509–620 (QLYL…ALTE), and 630–733 (RLRK…EVEN). Positions 274 to 733 (QLMEDYEKLA…IARTINEVEN (460 aa)) are interaction with DDN. Phosphoserine is present on Ser471. An N6-acetyllysine modification is found at Lys676. The residue at position 677 (Ser677) is a Phosphoserine. EF-hand domains lie at 746–781 (EQMN…LGYD) and 787–822 (QGEA…ETAD). Positions 759, 761, 763, 765, and 770 each coordinate Ca(2+). Ser890 is subject to Phosphoserine.

It belongs to the alpha-actinin family. In terms of assembly, homodimer; antiparallel. Interacts with MYOZ2, TTID and LPP. Interacts with DDN. Interacts with PSD. Interacts with MICALL2. Interacts with DNM2 and CTTN. Interacts with PDLIM1. Interacts with PDLIM2. Interacts with PDLIM4 (via PDZ domain). Interacts with IGSF8.

It is found in the cytoplasm. It localises to the cytoskeleton. The protein resides in the myofibril. Its subcellular location is the sarcomere. The protein localises to the z line. It is found in the cell membrane. It localises to the cell junction. The protein resides in the cell projection. Its subcellular location is the ruffle. F-actin cross-linking protein which is thought to anchor actin to a variety of intracellular structures. Association with IGSF8 regulates the immune synapse formation and is required for efficient T-cell activation. This is Alpha-actinin-1 (ACTN1) from Macaca fascicularis (Crab-eating macaque).